We begin with the raw amino-acid sequence, 452 residues long: Histone acetyltransferase type B subunit 2 (452 aa).

6 WD repeats span residues 155–195 (YEDG…NSKE), 205–245 (HHTK…SDGS), 256–296 (HHDA…NKAA), 300–340 (KESR…TPIS), 344–384 (SHCD…DDLS), and 401–441 (GHSS…SNDE).

This sequence belongs to the WD repeat RBAP46/RBAP48/MSI1 family. In terms of assembly, component of the HAT-B complex composed of at least HAT1 and HAT2. The HAT-B complex binds to histone H4 tail.

The protein resides in the cytoplasm. It is found in the nucleus. Regulatory subunit of the histone acetylase B (HAT-B) complex. The complex acetylates 'Lys-12' of histone H4 which is required for telomeric silencing. This chain is Histone acetyltransferase type B subunit 2 (HAT2), found in Yarrowia lipolytica (strain CLIB 122 / E 150) (Yeast).